Here is a 92-residue protein sequence, read N- to C-terminus: UPF0250 protein Pmen_3793 (92 aa).

Belongs to the UPF0250 family.

The sequence is that of UPF0250 protein Pmen_3793 from Ectopseudomonas mendocina (strain ymp) (Pseudomonas mendocina).